The primary structure comprises 467 residues: Asparagine--tRNA ligase (467 aa).

The protein belongs to the class-II aminoacyl-tRNA synthetase family. In terms of assembly, homodimer.

It localises to the cytoplasm. The enzyme catalyses tRNA(Asn) + L-asparagine + ATP = L-asparaginyl-tRNA(Asn) + AMP + diphosphate + H(+). The polypeptide is Asparagine--tRNA ligase (Bacteroides fragilis (strain ATCC 25285 / DSM 2151 / CCUG 4856 / JCM 11019 / LMG 10263 / NCTC 9343 / Onslow / VPI 2553 / EN-2)).